We begin with the raw amino-acid sequence, 322 residues long: Ribosomal RNA large subunit methyltransferase F (322 aa).

This sequence belongs to the methyltransferase superfamily. METTL16/RlmF family.

It is found in the cytoplasm. It catalyses the reaction adenosine(1618) in 23S rRNA + S-adenosyl-L-methionine = N(6)-methyladenosine(1618) in 23S rRNA + S-adenosyl-L-homocysteine + H(+). Specifically methylates the adenine in position 1618 of 23S rRNA. The chain is Ribosomal RNA large subunit methyltransferase F from Cytophaga hutchinsonii (strain ATCC 33406 / DSM 1761 / CIP 103989 / NBRC 15051 / NCIMB 9469 / D465).